We begin with the raw amino-acid sequence, 394 residues long: Chorismate synthase (394 aa).

Arg62 contributes to the NADP(+) binding site. FMN is bound by residues 144–146, Gly307, 322–326, and Arg349; these read RAS and KPTPT.

This sequence belongs to the chorismate synthase family. As to quaternary structure, homotetramer. FMNH2 is required as a cofactor.

It catalyses the reaction 5-O-(1-carboxyvinyl)-3-phosphoshikimate = chorismate + phosphate. The protein operates within metabolic intermediate biosynthesis; chorismate biosynthesis; chorismate from D-erythrose 4-phosphate and phosphoenolpyruvate: step 7/7. Catalyzes the anti-1,4-elimination of the C-3 phosphate and the C-6 proR hydrogen from 5-enolpyruvylshikimate-3-phosphate (EPSP) to yield chorismate, which is the branch point compound that serves as the starting substrate for the three terminal pathways of aromatic amino acid biosynthesis. This reaction introduces a second double bond into the aromatic ring system. The chain is Chorismate synthase from Acetivibrio thermocellus (strain ATCC 27405 / DSM 1237 / JCM 9322 / NBRC 103400 / NCIMB 10682 / NRRL B-4536 / VPI 7372) (Clostridium thermocellum).